Consider the following 332-residue polypeptide: Fructose-1,6-bisphosphatase class 1 (332 aa).

Mg(2+)-binding residues include Glu-92, Asp-113, Leu-115, and Asp-116. Substrate contacts are provided by residues 116-119 (DGSS), Asn-209, Tyr-242, and Lys-272. Position 278 (Glu-278) interacts with Mg(2+).

It belongs to the FBPase class 1 family. As to quaternary structure, homotetramer. Requires Mg(2+) as cofactor.

It localises to the cytoplasm. It carries out the reaction beta-D-fructose 1,6-bisphosphate + H2O = beta-D-fructose 6-phosphate + phosphate. It participates in carbohydrate biosynthesis; Calvin cycle. In Prosthecochloris aestuarii (strain DSM 271 / SK 413), this protein is Fructose-1,6-bisphosphatase class 1.